The primary structure comprises 96 residues: Co-chaperonin GroES (96 aa).

Belongs to the GroES chaperonin family. In terms of assembly, heptamer of 7 subunits arranged in a ring. Interacts with the chaperonin GroEL.

It localises to the cytoplasm. In terms of biological role, together with the chaperonin GroEL, plays an essential role in assisting protein folding. The GroEL-GroES system forms a nano-cage that allows encapsulation of the non-native substrate proteins and provides a physical environment optimized to promote and accelerate protein folding. GroES binds to the apical surface of the GroEL ring, thereby capping the opening of the GroEL channel. This is Co-chaperonin GroES from Vibrio atlanticus (strain LGP32) (Vibrio splendidus (strain Mel32)).